Reading from the N-terminus, the 229-residue chain is Glutathione S-transferase 3 (229 aa).

Position 2 is a blocked amino end (Ala) (alanine 2). In terms of domain architecture, GST N-terminal spans 3–83; it reads AKPVLYYFNG…YIAGKYNLYG (81 aa). Residues tyrosine 9, 54–55, and 67–68 contribute to the glutathione site; these read QV and QT. A GST C-terminal domain is found at 85 to 207; sequence DLKERALIDM…LAPGSKRKPI (123 aa).

It belongs to the GST superfamily. Alpha family. Homodimer or heterodimer (with a subunit from group CL-4).

The protein localises to the cytoplasm. The catalysed reaction is RX + glutathione = an S-substituted glutathione + a halide anion + H(+). In terms of biological role, catalyzes the conjugation of GSH to a wide variety of electrophilic alkylating agents. Also involved in the metabolism of lipid hydroperoxides, prostaglandins and leukotriene A4 and in binding of non-substrate hydrophobic ligands such as bile acids, a number of drugs and thyroid hormones. This GST does not exhibit peroxidase activity. The chain is Glutathione S-transferase 3 from Gallus gallus (Chicken).